We begin with the raw amino-acid sequence, 421 residues long: Probable dual-specificity RNA methyltransferase RlmN (421 aa).

The disordered stretch occupies residues 1-23 (MTATTAESGRPDQPPTAEAGRPV). Glu127 (proton acceptor) is an active-site residue. One can recognise a Radical SAM core domain in the interval 133-372 (YPDRATVCVS…VTTVRDTRGR (240 aa)). The cysteines at positions 140 and 378 are disulfide-linked. Residues Cys147, Cys151, and Cys154 each contribute to the [4Fe-4S] cluster site. Residues 202-203 (GE), Ser236, 259-261 (SLH), and Asn335 contribute to the S-adenosyl-L-methionine site. Cys378 functions as the S-methylcysteine intermediate in the catalytic mechanism. Residues 383 to 421 (AEPAGKPERTDRPEQVGSDRLVEFGAVGSTTPDGDRVLR) form a disordered region. Over residues 387-396 (GKPERTDRPE) the composition is skewed to basic and acidic residues.

This sequence belongs to the radical SAM superfamily. RlmN family. [4Fe-4S] cluster serves as cofactor.

It is found in the cytoplasm. The enzyme catalyses adenosine(2503) in 23S rRNA + 2 reduced [2Fe-2S]-[ferredoxin] + 2 S-adenosyl-L-methionine = 2-methyladenosine(2503) in 23S rRNA + 5'-deoxyadenosine + L-methionine + 2 oxidized [2Fe-2S]-[ferredoxin] + S-adenosyl-L-homocysteine. It carries out the reaction adenosine(37) in tRNA + 2 reduced [2Fe-2S]-[ferredoxin] + 2 S-adenosyl-L-methionine = 2-methyladenosine(37) in tRNA + 5'-deoxyadenosine + L-methionine + 2 oxidized [2Fe-2S]-[ferredoxin] + S-adenosyl-L-homocysteine. Its function is as follows. Specifically methylates position 2 of adenine 2503 in 23S rRNA and position 2 of adenine 37 in tRNAs. The protein is Probable dual-specificity RNA methyltransferase RlmN of Frankia casuarinae (strain DSM 45818 / CECT 9043 / HFP020203 / CcI3).